The primary structure comprises 581 residues: MSAVELVNELSARFGEAVFGEQPTHDAFPTLWIKPEAMPALHRYLKHEIERPFPLLVDLWAIDETARHHREGQPPSGVTIASHLMSLERNADIRLKCALPADDPRAHTIAEIYPNADWYEREAFDMFGVHFEGRRDHRRILMPPLWDGHPMRKDQPARATERPPFVMTAARFDAEEQALAVDPEALGLPTQRDGVELMILNYGPHSMATHGVFRIVLALDGEEIVAARPDIGFHHRGAEKMGERQSWHQYIPYTDRIDYLGGVMGEMPYLQAVERLCGIAVPERAQTVRIMLCEIFRIMNHLLFYGTLAQDTGAMSPVFYMFTDRERGYRVIEAITGARMHPGWFRIGGLAADLPEGWDALVRDFLDWMPARLDDYEGMVMRNEIFRARTVGIAAYDTATAFDWGITGPGLRATGCGWDMRKARPYGGYQNFEFEVPTGHRGDCYDRARVRVDEIRQSLRIIRQCLDHMPAGPIKADHPLTTPPPRERMLHDIETMIHHFVGSSWGPVVPVGEATGQVESVRGLTQYAVVSDGETTAYRTRIRTPSFAHLQSIATIAPGLTVADLVAYLGSIDYVMSDVDR.

The interval 1-172 is NADH dehydrogenase I subunit C; it reads MSAVELVNEL…PPFVMTAARF (172 aa). The interval 196-581 is NADH dehydrogenase I subunit D; that stretch reads ELMILNYGPH…IDYVMSDVDR (386 aa).

The protein in the N-terminal section; belongs to the complex I 30 kDa subunit family. In the C-terminal section; belongs to the complex I 49 kDa subunit family. NDH-1 is composed of 13 different subunits. Subunits NuoB, CD, E, F, and G constitute the peripheral sector of the complex.

It localises to the cell inner membrane. It carries out the reaction a quinone + NADH + 5 H(+)(in) = a quinol + NAD(+) + 4 H(+)(out). Functionally, NDH-1 shuttles electrons from NADH, via FMN and iron-sulfur (Fe-S) centers, to quinones in the respiratory chain. The immediate electron acceptor for the enzyme in this species is believed to be ubiquinone. Couples the redox reaction to proton translocation (for every two electrons transferred, four hydrogen ions are translocated across the cytoplasmic membrane), and thus conserves the redox energy in a proton gradient. This Rhodopseudomonas palustris (strain BisB18) protein is NADH-quinone oxidoreductase subunit C/D.